The following is a 380-amino-acid chain: MTNYPITYRLIKKEKHTGARLGEIITPHGTFPTPMFMPVGTQATVKTQSPEELKEIGSGIILSNTYHLWLRPGDELIARAGGLHKFMNWDQAILTDSGGFQVYSLADSRNITEEGVTFKNHLNGSKMFLSPEKAISIQNNLGSDIMMSFDECPQFYQPYDYVKKSIERTSRWAERGLKAHRRPHDQGLFGIVQGAGFEDLRRQSAADLVGMDFPGYSIGGLAVGESHAEMNAVLDFTTPLLPENKPRYLMGVGAPDSLIDGVIRGVDMFDCVLPTRIARNGTCMTSEGRLVVKNAKFAEDFTPLDHNCDCYTCQHYTRAYLRHLLKADETFGMRLTSYHNLYFLVNLMKQVRQAIMDDNLLEFRQDFLERYGYNSSSRNF.

Asp96 acts as the Proton acceptor in catalysis. Residues 96–100 (DSGGF), Asp150, Gln193, and Gly220 each bind substrate. Residues 251 to 257 (GVGAPDS) are RNA binding. Residue Asp270 is the Nucleophile of the active site. An RNA binding; important for wobble base 34 recognition region spans residues 275 to 279 (TRIAR). Residues Cys308, Cys310, Cys313, and His339 each coordinate Zn(2+).

It belongs to the queuine tRNA-ribosyltransferase family. As to quaternary structure, homodimer. Within each dimer, one monomer is responsible for RNA recognition and catalysis, while the other monomer binds to the replacement base PreQ1. Zn(2+) serves as cofactor.

It catalyses the reaction 7-aminomethyl-7-carbaguanine + guanosine(34) in tRNA = 7-aminomethyl-7-carbaguanosine(34) in tRNA + guanine. It participates in tRNA modification; tRNA-queuosine biosynthesis. In terms of biological role, catalyzes the base-exchange of a guanine (G) residue with the queuine precursor 7-aminomethyl-7-deazaguanine (PreQ1) at position 34 (anticodon wobble position) in tRNAs with GU(N) anticodons (tRNA-Asp, -Asn, -His and -Tyr). Catalysis occurs through a double-displacement mechanism. The nucleophile active site attacks the C1' of nucleotide 34 to detach the guanine base from the RNA, forming a covalent enzyme-RNA intermediate. The proton acceptor active site deprotonates the incoming PreQ1, allowing a nucleophilic attack on the C1' of the ribose to form the product. After dissociation, two additional enzymatic reactions on the tRNA convert PreQ1 to queuine (Q), resulting in the hypermodified nucleoside queuosine (7-(((4,5-cis-dihydroxy-2-cyclopenten-1-yl)amino)methyl)-7-deazaguanosine). In Streptococcus equi subsp. zooepidemicus (strain H70), this protein is Queuine tRNA-ribosyltransferase.